We begin with the raw amino-acid sequence, 421 residues long: O-acetyl-L-homoserine sulfhydrylase 1 (421 aa).

K206 carries the N6-(pyridoxal phosphate)lysine modification.

The protein belongs to the trans-sulfuration enzymes family. In terms of assembly, homotetramer. Pyridoxal 5'-phosphate serves as cofactor.

It catalyses the reaction O-acetyl-L-homoserine + hydrogen sulfide = L-homocysteine + acetate. It functions in the pathway amino-acid biosynthesis; L-methionine biosynthesis via de novo pathway; L-homocysteine from O-acetyl-L-homoserine: step 1/1. With respect to regulation, inhibited by the carbonyl reagents hydroxylamine and phenylhydrazine. Also inhibited by methionine and propargylglycine. In terms of biological role, catalyzes the conversion of O-acetyl-L-homoserine (OAH) into homocysteine in the methionine biosynthesis pathway. Has weak activity with O-acetyl-L-serine, O-phospho-L-serine, L-serine, O-succinyl-L-homoserine and L-homoserine. Shows low CTT beta-lyase activity and very low CTT gamma-synthase activity. This chain is O-acetyl-L-homoserine sulfhydrylase 1, found in Thermus thermophilus (strain ATCC 27634 / DSM 579 / HB8).